The primary structure comprises 1337 residues: DNA mismatch repair protein Msh6 (1337 aa).

The region spanning 68-130 (PGDLVWAKME…IKYLRPYKGS (63 aa)) is the PWWP domain. The interval 170-310 (AVCSEPSDTE…SEAPKRAAPV (141 aa)) is disordered. Residues 176–187 (SDTEEAEEEEME) show a composition bias toward acidic residues. The segment covering 226-248 (VLDSDSDRDGSDVEFKPDVKEAS) has biased composition (basic and acidic residues). A compositionally biased stretch (acidic residues) spans 257-272 (DENEATDVETDEESIE). Basic residues predominate over residues 279–292 (PSKRKRGNVSKPSK). The span at 294 to 305 (SSLENEHSEAPK) shows a compositional bias: basic and acidic residues. 1111-1118 (GPNMGGKS) provides a ligand contact to ATP.

Belongs to the DNA mismatch repair MutS family.

It is found in the nucleus. Component of the post-replicative DNA mismatch repair system (MMR). Involved in B cell growth by positively regulating B cell proliferation and controlling replication efficiency. Controls cell cycle to prevent re-replication and defects in DNA damage-induced G2 checkpoint. Doesn't seem to counteract or control the immunoglobulin gene conversion (Ig GC) and to contribute to guanine/uracil mismatch repair. This chain is DNA mismatch repair protein Msh6, found in Gallus gallus (Chicken).